The following is a 230-amino-acid chain: Heptaprenylglyceryl phosphate synthase (230 aa).

K12 is a binding site for sn-glycerol 1-phosphate. Positions 14 and 40 each coordinate Mg(2+). Sn-glycerol 1-phosphate contacts are provided by residues 159–164 (YIEYSG), G189, and 209–210 (GD).

It belongs to the GGGP/HepGP synthase family. Group I subfamily. Homodimer. Mg(2+) serves as cofactor.

The catalysed reaction is sn-glycerol 1-phosphate + all-trans-heptaprenyl diphosphate = 3-heptaprenyl-sn-glycero-1-phosphate + diphosphate. Its pathway is membrane lipid metabolism; glycerophospholipid metabolism. Prenyltransferase that catalyzes in vivo the transfer of the heptaprenyl moiety of heptaprenyl pyrophosphate (HepPP; 35 carbon atoms) to the C3 hydroxyl of sn-glycerol-1-phosphate (G1P), producing heptaprenylglyceryl phosphate (HepGP). This reaction is an ether-bond-formation step in the biosynthesis of archaea-type G1P-based membrane lipids found in Bacillales. To a much lesser extent, is also able to use geranylgeranyl diphosphate (GGPP; C20) as the prenyl donor. The chain is Heptaprenylglyceryl phosphate synthase from Staphylococcus aureus (strain NCTC 8325 / PS 47).